The following is a 62-amino-acid chain: Photosystem II reaction center protein Z (62 aa).

Residue M1 is modified to N-formylmethionine. At 1-4 (MTIL) the chain is on the lumenal side. Residues 5–25 (FQLALAALVILSFVMVIGVPV) form a helical membrane-spanning segment. Over 26-36 (AYASPQDWDRS) the chain is Cytoplasmic. A helical membrane pass occupies residues 37–58 (KQLIFLGSGLWIALVLVVGVLN). Topologically, residues 59–62 (FFVV) are lumenal.

The protein belongs to the PsbZ family. As to quaternary structure, PSII is composed of 1 copy each of membrane proteins PsbA, PsbB, PsbC, PsbD, PsbE, PsbF, PsbH, PsbI, PsbJ, PsbK, PsbL, PsbM, PsbT, PsbX, PsbY, PsbZ, Psb30/Ycf12, peripheral proteins PsbO, CyanoQ (PsbQ), PsbU, PsbV and a large number of cofactors. It forms dimeric complexes. Part of a photosystem II (PSII) assembly intermediate complex PSII-I; crystallized from a strain deleted of psbJ, it forms monomeric PSII before addition of the oxygen evolving complex. PSII-I includes 3 assembly factors not found in mature PSII (Psb27, Psb28 and Psb34). The cofactor is PSII binds multiple chlorophylls, carotenoids and specific lipids..

Its subcellular location is the cellular thylakoid membrane. Functionally, may control the interaction of photosystem II (PSII) cores with the light-harvesting antenna, regulates electron flow through the 2 photosystem reaction centers. PSII is a light-driven water plastoquinone oxidoreductase, using light energy to abstract electrons from H(2)O, generating a proton gradient subsequently used for ATP formation. In terms of biological role, may also aid in binding of PsbK, Psb30/Ycf12 and the oxygen-evolving complex to PSII, at least in vitro. This Thermosynechococcus vestitus (strain NIES-2133 / IAM M-273 / BP-1) protein is Photosystem II reaction center protein Z.